A 176-amino-acid chain; its full sequence is Large ribosomal subunit protein bL17 (176 aa).

A disordered region spans residues 124-176; the sequence is AAPKAARQDRSKRVKGSRKTEASAAKAAPAAQAAPELPAESDAPAAEAAPTEE. Residues 145–176 are compositionally biased toward low complexity; that stretch reads ASAAKAAPAAQAAPELPAESDAPAAEAAPTEE.

The protein belongs to the bacterial ribosomal protein bL17 family. As to quaternary structure, part of the 50S ribosomal subunit. Contacts protein L32.

The protein is Large ribosomal subunit protein bL17 of Chlorobium phaeovibrioides (strain DSM 265 / 1930) (Prosthecochloris vibrioformis (strain DSM 265)).